The chain runs to 1414 residues: DNA-directed RNA polymerase subunit beta' (1414 aa).

Residues Cys-70, Cys-72, Cys-85, and Cys-88 each contribute to the Zn(2+) site. Residues Asp-460, Asp-462, and Asp-464 each coordinate Mg(2+). Residues Cys-815, Cys-889, Cys-896, and Cys-899 each coordinate Zn(2+). The disordered stretch occupies residues 1395–1414 (EAEAQFADISSTPDSDTDAS).

The protein belongs to the RNA polymerase beta' chain family. In terms of assembly, the RNAP catalytic core consists of 2 alpha, 1 beta, 1 beta' and 1 omega subunit. When a sigma factor is associated with the core the holoenzyme is formed, which can initiate transcription. It depends on Mg(2+) as a cofactor. Requires Zn(2+) as cofactor.

It catalyses the reaction RNA(n) + a ribonucleoside 5'-triphosphate = RNA(n+1) + diphosphate. In terms of biological role, DNA-dependent RNA polymerase catalyzes the transcription of DNA into RNA using the four ribonucleoside triphosphates as substrates. This chain is DNA-directed RNA polymerase subunit beta', found in Herminiimonas arsenicoxydans.